The chain runs to 372 residues: Silphinene synthase peniA (372 aa).

Residues D116, E121, N263, S267, and E271 each coordinate Mg(2+). Positions 116 to 121 (DDQFDE) match the DDXXE motif motif.

This sequence belongs to the terpene synthase family. Requires Mg(2+) as cofactor.

The enzyme catalyses (2E,6E)-farnesyl diphosphate = silphinene + diphosphate. Its pathway is secondary metabolite biosynthesis; terpenoid biosynthesis. In terms of biological role, sesquiterpene cyclase; part of the gene cluster that mediates the biosynthesis of penifulvin A, a potent insecticidal sesquiterpene that features a [5.5.5.6]dioxafenestrane ring. Within the pathway, peniA catalyzes the first step and generates the angular triquinane scaffold silphinene via cyclization of the linear farnesyl pyrophosphate (FPP). The cytochrome P450 monooxygenase peniB and the flavin-dependent monooxygenase peniC then catalyze a series of oxidation reactions to transform silphinene into penifulvin A. This Penicillium patulum (Penicillium griseofulvum) protein is Silphinene synthase peniA.